The following is a 263-amino-acid chain: Tryptophan 2,3-dioxygenase (263 aa).

Substrate-binding positions include 32–36 (FIIVH), tyrosine 94, and arginine 98. Histidine 221 serves as a coordination point for heme. Substrate is bound at residue threonine 235.

This sequence belongs to the tryptophan 2,3-dioxygenase family. Homotetramer. Heme is required as a cofactor.

It catalyses the reaction L-tryptophan + O2 = N-formyl-L-kynurenine. The protein operates within amino-acid degradation; L-tryptophan degradation via kynurenine pathway; L-kynurenine from L-tryptophan: step 1/2. In terms of biological role, heme-dependent dioxygenase that catalyzes the oxidative cleavage of the L-tryptophan (L-Trp) pyrrole ring and converts L-tryptophan to N-formyl-L-kynurenine. Catalyzes the oxidative cleavage of the indole moiety. The chain is Tryptophan 2,3-dioxygenase from Erythrobacter litoralis (strain HTCC2594).